The primary structure comprises 61 residues: Metallothionein-1F (61 aa).

M1 is subject to N-acetylmethionine. Residues 1-29 (MDPNCSCAAGVSCTCAGSCKCKECKCTSC) are beta. A divalent metal cation contacts are provided by C5, C7, C13, C15, C19, C21, C24, C26, C29, C33, C34, C36, C37, C41, C44, C48, C50, and C57. The segment at 30 to 61 (KKSCCSCCPVGCSKCAQGCVCKGASEKCSCCD) is alpha. The residue at position 58 (S58) is a Phosphoserine. A divalent metal cation-binding residues include C59 and C60.

It belongs to the metallothionein superfamily. Type 1 family. In terms of assembly, monomer.

Its function is as follows. Metallothioneins have a high content of cysteine residues that bind various heavy metals; these proteins are transcriptionally regulated by both heavy metals and glucocorticoids. The protein is Metallothionein-1F (MT1F) of Homo sapiens (Human).